The primary structure comprises 219 residues: N-(5'-phosphoribosyl)anthranilate isomerase (219 aa).

This sequence belongs to the TrpF family.

It carries out the reaction N-(5-phospho-beta-D-ribosyl)anthranilate = 1-(2-carboxyphenylamino)-1-deoxy-D-ribulose 5-phosphate. It participates in amino-acid biosynthesis; L-tryptophan biosynthesis; L-tryptophan from chorismate: step 3/5. The chain is N-(5'-phosphoribosyl)anthranilate isomerase from Chloroherpeton thalassium (strain ATCC 35110 / GB-78).